Consider the following 224-residue polypeptide: UPF0758 protein VP0184 (224 aa).

The 123-residue stretch at 102–224 folds into the MPN domain; sequence ALTSPEQTKL…SVSFAERGWI (123 aa). Residues His-173, His-175, and Asp-186 each coordinate Zn(2+). Positions 173-186 match the JAMM motif motif; sequence HNHPSGVAEPSQAD.

The protein belongs to the UPF0758 family.

The protein is UPF0758 protein VP0184 of Vibrio parahaemolyticus serotype O3:K6 (strain RIMD 2210633).